A 269-amino-acid polypeptide reads, in one-letter code: uncharacterized protein (269 aa).

Positions 1 to 22 (MSANGTDQQSDHGHSTSNNKDC) are disordered.

This is an uncharacterized protein from Gallus gallus (Chicken).